Reading from the N-terminus, the 1327-residue chain is Polarized growth protein L1 (1327 aa).

Residues 1–30 (MRESFASLLATGAGKLALSLLFAATPFTSA) form the signal peptide. The Extracellular segment spans residues 31-1169 (YTFNQVPSPN…FSQQNGKHLA (1139 aa)). 17 N-linked (GlcNAc...) asparagine glycosylation sites follow: asparagine 74, asparagine 90, asparagine 105, asparagine 115, asparagine 132, asparagine 170, asparagine 217, asparagine 224, asparagine 235, asparagine 318, asparagine 342, asparagine 452, asparagine 475, asparagine 601, asparagine 639, asparagine 648, and asparagine 691. The stretch at 595–641 (NLYVAGNFSNNDGRNNIFSFKQGASDPTALPNRGLNRQVMTLYQNDS) is one Kelch 1 repeat. The Kelch 2 repeat unit spans residues 699-754 (QVLAVSGFFDSVNEFNGNPSTNVQDFAVWVPSRSNWLHNLDFFTLAMSGRLMTFAD). Residues asparagine 835, asparagine 852, asparagine 877, and asparagine 931 are each glycosylated (N-linked (GlcNAc...) asparagine). Kelch repeat units lie at residues 945 to 993 (DVFV…ISDT) and 994 to 1040 (QMYI…TIAN). Asparagine 1000, asparagine 1006, and asparagine 1126 each carry an N-linked (GlcNAc...) asparagine glycan. A helical transmembrane segment spans residues 1170 to 1190 (LWAIVLIGLAIALVLTFLLVV). Topologically, residues 1191–1327 (AGILLEWYRN…VFDTILACSS (137 aa)) are cytoplasmic.

Belongs to the RAX2 family.

It localises to the cell membrane. Functionally, has been identified within the cluster that mediates the biosynthesis of squalestatin, but as its expression does not follow that of the other cluster members and it is not conserved in close related clusters, L1 seems not to be involved in the biosynthesis of squalestatin. Probably plays a role as a cell polarity regulator. In Phoma sp. (strain ATCC 20986 / MF5453), this protein is Polarized growth protein L1.